The chain runs to 678 residues: Elongation factor G 2 (678 aa).

The tr-type G domain occupies 4 to 278 (QKLRNIGIIA…AVVDYLPSPQ (275 aa)). GTP-binding positions include 13-20 (AHVDAGKT), 77-81 (DTPGH), and 131-134 (NKMD).

This sequence belongs to the TRAFAC class translation factor GTPase superfamily. Classic translation factor GTPase family. EF-G/EF-2 subfamily.

It is found in the cytoplasm. In terms of biological role, catalyzes the GTP-dependent ribosomal translocation step during translation elongation. During this step, the ribosome changes from the pre-translocational (PRE) to the post-translocational (POST) state as the newly formed A-site-bound peptidyl-tRNA and P-site-bound deacylated tRNA move to the P and E sites, respectively. Catalyzes the coordinated movement of the two tRNA molecules, the mRNA and conformational changes in the ribosome. The chain is Elongation factor G 2 from Hahella chejuensis (strain KCTC 2396).